The sequence spans 341 residues: Holliday junction branch migration complex subunit RuvB (341 aa).

Residues 1–182 (MTERFVTPDF…FGVICRLEFY (182 aa)) are large ATPase domain (RuvB-L). Residues Leu-21, Arg-22, Gly-63, Lys-66, Thr-67, Thr-68, 129–131 (EDY), Arg-172, Tyr-182, and Arg-219 each bind ATP. Thr-67 is a Mg(2+) binding site. Positions 183–253 (TDDELATIAG…IADMALSRLE (71 aa)) are small ATPAse domain (RuvB-S). A head domain (RuvB-H) region spans residues 256 to 341 (NCGLDHMDRL…RGKTSGELFS (86 aa)). Residues Arg-311 and Arg-316 each coordinate DNA.

Belongs to the RuvB family. In terms of assembly, homohexamer. Forms an RuvA(8)-RuvB(12)-Holliday junction (HJ) complex. HJ DNA is sandwiched between 2 RuvA tetramers; dsDNA enters through RuvA and exits via RuvB. An RuvB hexamer assembles on each DNA strand where it exits the tetramer. Each RuvB hexamer is contacted by two RuvA subunits (via domain III) on 2 adjacent RuvB subunits; this complex drives branch migration. In the full resolvosome a probable DNA-RuvA(4)-RuvB(12)-RuvC(2) complex forms which resolves the HJ.

The protein localises to the cytoplasm. The catalysed reaction is ATP + H2O = ADP + phosphate + H(+). Functionally, the RuvA-RuvB-RuvC complex processes Holliday junction (HJ) DNA during genetic recombination and DNA repair, while the RuvA-RuvB complex plays an important role in the rescue of blocked DNA replication forks via replication fork reversal (RFR). RuvA specifically binds to HJ cruciform DNA, conferring on it an open structure. The RuvB hexamer acts as an ATP-dependent pump, pulling dsDNA into and through the RuvAB complex. RuvB forms 2 homohexamers on either side of HJ DNA bound by 1 or 2 RuvA tetramers; 4 subunits per hexamer contact DNA at a time. Coordinated motions by a converter formed by DNA-disengaged RuvB subunits stimulates ATP hydrolysis and nucleotide exchange. Immobilization of the converter enables RuvB to convert the ATP-contained energy into a lever motion, pulling 2 nucleotides of DNA out of the RuvA tetramer per ATP hydrolyzed, thus driving DNA branch migration. The RuvB motors rotate together with the DNA substrate, which together with the progressing nucleotide cycle form the mechanistic basis for DNA recombination by continuous HJ branch migration. Branch migration allows RuvC to scan DNA until it finds its consensus sequence, where it cleaves and resolves cruciform DNA. The sequence is that of Holliday junction branch migration complex subunit RuvB from Syntrophotalea carbinolica (strain DSM 2380 / NBRC 103641 / GraBd1) (Pelobacter carbinolicus).